The primary structure comprises 117 residues: Large ribosomal subunit protein bL17 (117 aa).

The protein belongs to the bacterial ribosomal protein bL17 family. As to quaternary structure, part of the 50S ribosomal subunit. Contacts protein L32.

This chain is Large ribosomal subunit protein bL17, found in Coprothermobacter proteolyticus (strain ATCC 35245 / DSM 5265 / OCM 4 / BT).